The primary structure comprises 82 residues: Putative membrane protein insertion efficiency factor (82 aa).

This sequence belongs to the UPF0161 family.

It is found in the cell inner membrane. Its function is as follows. Could be involved in insertion of integral membrane proteins into the membrane. The protein is Putative membrane protein insertion efficiency factor of Rickettsia africae (strain ESF-5).